Reading from the N-terminus, the 216-residue chain is uncharacterized protein (216 aa).

A helical membrane pass occupies residues Tyr5–Ser25. Low complexity-rich tracts occupy residues Lys28 to Ser67 and Lys89 to Lys108. The interval Lys28–Ser115 is disordered. 2 consecutive transmembrane segments (helical) span residues Gly137–Ile157 and Ile183–Ile203.

It is found in the cell membrane. This is an uncharacterized protein from Bacillus subtilis (strain 168).